Consider the following 423-residue polypeptide: MSNASINHASIQLENAAVSNVSAFNKTKRKLMMLGPAFIAAIGYIDPGNFATNIESGSSFGYQLLWVVLWANLMAMLIQYLSAKLGIVTGKNLAEHLRDHLPNKWAVGFYWIQAEIIAIATDLAEFIGAAVGFQLVFGISLMEGAMITAVATVMILILNQKGQKPLEVVIGSLLMLVAVIYIAELFFAHPAGGEMVKGLLTPTFTDSHQIYLAAGILGATVMPHVIYLHSALFKNSYGESTKTRLRTTRFDVLIAMVIAGFVNIAIVAMAAAVFHYSGNQHVAEIETAYMTLTPLVGKAASVLFGVSLIASGLSSTVVGTMAGQVVMQGFVRFSIPMWVRRFITMAPSFVVIGLGMNTTDILVMSQVVLSFGIALAIIPLLIFTNSERLMGEFKNNKWVSYAGVVIVSLVLSLNAYLMVTLTA.

11 consecutive transmembrane segments (helical) span residues 31–51 (LMML…GNFA), 58–78 (SSFG…AMLI), 116–136 (IIAI…FQLV), 137–157 (FGIS…MILI), 168–188 (VVIG…LFFA), 213–233 (AAGI…SALF), 254–274 (IAMV…AAVF), 302–322 (VLFG…GTMA), 342–362 (FITM…TDIL), 363–383 (VMSQ…LLIF), and 401–421 (YAGV…MVTL).

Belongs to the NRAMP family.

The protein localises to the cell inner membrane. In terms of biological role, h(+)-stimulated, divalent metal cation uptake system. This is Divalent metal cation transporter MntH from Vibrio campbellii (strain ATCC BAA-1116).